We begin with the raw amino-acid sequence, 560 residues long: Chaperonin GroEL 2 (560 aa).

ATP contacts are provided by residues 29–32 (TLGP), 86–90 (DGTTT), glycine 413, 478–480 (NAA), and aspartate 494.

This sequence belongs to the chaperonin (HSP60) family. Forms a cylinder of 14 subunits composed of two heptameric rings stacked back-to-back. Interacts with the co-chaperonin GroES.

It localises to the cytoplasm. The enzyme catalyses ATP + H2O + a folded polypeptide = ADP + phosphate + an unfolded polypeptide.. Its function is as follows. Together with its co-chaperonin GroES, plays an essential role in assisting protein folding. The GroEL-GroES system forms a nano-cage that allows encapsulation of the non-native substrate proteins and provides a physical environment optimized to promote and accelerate protein folding. In Nostoc sp. (strain PCC 7120 / SAG 25.82 / UTEX 2576), this protein is Chaperonin GroEL 2.